The sequence spans 292 residues: Transcription factor HFR1 (292 aa).

The disordered stretch occupies residues 114-153 (KRRIQVLSSDDESEEFTREVPSVTRKGSKRRRRDEKMSNK). A basic motif; degenerate region spans residues 134–147 (PSVTRKGSKRRRRD). The bHLH domain occupies 134–183 (PSVTRKGSKRRRRDEKMSNKMRKLQQLVPNCHKTDKVSVLDKTIEYMKNL). A compositionally biased stretch (basic residues) spans 139 to 153 (KGSKRRRRDEKMSNK). The Nuclear localization signal motif lies at 141-148 (SKRRRRDE). Residues 148–183 (EKMSNKMRKLQQLVPNCHKTDKVSVLDKTIEYMKNL) form a helix-loop-helix motif region.

As to quaternary structure, binds to FHY1 and FHL. Forms PHYA/FHY1/HFR1 complex. Homodimer and heterodimer with PIF3. Do not interact alone with either phytochrome A (phyA) or B (phyB), but REP1/PIF3 complex binds to phyA and phyB, preferentially to the Pfr forms. Forms non-functional heterodimer with PRE6, causing liberation of PIF4 from the transcriptionally inactive complex HFR1-PIF4. Repressed when bound to PRE1, PRE2 and PRE4. In terms of tissue distribution, mainly expressed in fruits and flowers and, to a lower extent, in leaves, stems, seedlings and roots.

It is found in the nucleus. In terms of biological role, atypical bHLH transcription factor that regulates photomorphogenesis through modulation of phytochrome (e.g. PHYA) and cryptochrome signalings. Suppresses the transcriptional regulation activity of PIF4 by forming non-DNA-binding heterodimer. This Arabidopsis thaliana (Mouse-ear cress) protein is Transcription factor HFR1.